We begin with the raw amino-acid sequence, 473 residues long: Serine incorporator 3 (473 aa).

Topologically, residues 1-96 are extracellular; sequence MGAVLGVFSL…KDCDVLVGYK (96 aa). N-linked (GlcNAc...) asparagine glycosylation is present at asparagine 34. The helical transmembrane segment at 97 to 117 threads the bilayer; it reads AVYRISFAMAIFFFVFSLLMF. Over 118–132 the chain is Cytoplasmic; it reads KVKTSKDLRAAVHNG. Residues 133–153 form a helical membrane-spanning segment; it reads FWFFKIAALIGIMVGSFYIPG. The Extracellular portion of the chain corresponds to 154 to 159; that stretch reads GYFSSV. Residues 160 to 180 form a helical membrane-spanning segment; that stretch reads WFVVGMIGAALFILIQLVLLV. Residues 181–203 lie on the Cytoplasmic side of the membrane; the sequence is DFAHSWNESWVNRMEEGNPRLWY. The helical transmembrane segment at 204–224 threads the bilayer; it reads AALLSFTSAFYILSIICVGLL. Residues 225 to 239 are Extracellular-facing; that stretch reads YTYYTKPDGCTENKF. The chain crosses the membrane as a helical span at residues 240 to 260; it reads FISINLILCVVASIISIHPKI. Residues 261–329 are Cytoplasmic-facing; that stretch reads QEHQPRSGLL…VPTPTPPSKS (69 aa). The helical transmembrane segment at 330 to 350 threads the bilayer; that stretch reads GSLLDSDNFIGLFVFVLCLLY. Over 351–406 the chain is Extracellular; sequence SSIRTSTNSQVDKLTLSGSDSVILGDTTTSGASDEEDGQPRRAVDNEKEGVQYSYS. Serine 371 carries the post-translational modification Phosphoserine. Residues 407-427 form a helical membrane-spanning segment; sequence LFHLMLCLASLYIMMTLTSWY. Topologically, residues 428 to 446 are cytoplasmic; it reads SPDAKFQSMTSKWPAVWVK. Residues 447–467 traverse the membrane as a helical segment; sequence ISSSWVCLLLYVWTLVAPLVL. At 468 to 473 the chain is on the extracellular side; sequence TSRDFS.

This sequence belongs to the TDE1 family. In terms of processing, N-glycosylated. Ubiquitous. Expression levels were increased fourfold to tenfold in lung tumor tissues compared with normal pulmonary tissues.

It is found in the cell membrane. Its subcellular location is the golgi apparatus membrane. The protein resides in the cytoplasm. The protein localises to the perinuclear region. The enzyme catalyses a 1,2-diacyl-sn-glycero-3-phospho-L-serine(in) = a 1,2-diacyl-sn-glycero-3-phospho-L-serine(out). The catalysed reaction is a 1,2-diacyl-sn-glycero-3-phosphocholine(in) = a 1,2-diacyl-sn-glycero-3-phosphocholine(out). It catalyses the reaction a 1,2-diacyl-sn-glycero-3-phosphoethanolamine(in) = a 1,2-diacyl-sn-glycero-3-phosphoethanolamine(out). In terms of biological role, restriction factor required to restrict infectivity of lentiviruses, such as HIV-1: acts by inhibiting an early step of viral infection. Impairs the penetration of the viral particle into the cytoplasm. Non-ATP-dependent, non-specific lipid transporter for phosphatidylserine, phosphatidylcholine, and phosphatidylethanolamine. Functions as a scramblase that flips lipids in both directions across the membrane. Phospholipid scrambling results in HIV-1 surface exposure of phosphatidylserine and loss of membrane asymmetry, which leads to changes in HIV-1 Env conformation and loss of infectivity. The polypeptide is Serine incorporator 3 (Homo sapiens (Human)).